The primary structure comprises 579 residues: Basic helix-loop-helix ARNT-like protein 2 (579 aa).

Residues 1–198 (MEFPRKRRGR…SPREKPIDTK (198 aa)) are interaction with PER2. The Nuclear localization signal signature appears at 4-9 (PRKRRG). Residues 40-61 (RTGVSAPSGIREAHSQMEKRRR) are disordered. The bHLH domain occupies 48 to 101 (GIREAHSQMEKRRRDKMNHLIQKLSSMIPPHIPTAHKLDKLSVLRRAVQYLRSL). The segment covering 50–59 (REAHSQMEKR) has biased composition (basic and acidic residues). The short motif at 118–128 (IQDKELSHLIL) is the Nuclear export signal 1 element. One can recognise a PAS 1 domain in the interval 119–190 (QDKELSHLIL…KEQLSCDGSP (72 aa)). A compositionally biased stretch (basic and acidic residues) spans 186–196 (CDGSPREKPID). The tract at residues 186–213 (CDGSPREKPIDTKTSQVYSHPYTGRPRM) is disordered. Residue Lys226 forms a Glycyl lysine isopeptide (Lys-Gly) (interchain with G-Cter in SUMO2 and SUMO3) linkage. Residue Lys233 forms a Glycyl lysine isopeptide (Lys-Gly) (interchain with G-Cter in SUMO2) linkage. The 71-residue stretch at 296–366 (VPQKSGKINV…DKHKAVLQSK (71 aa)) folds into the PAS 2 domain. The Nuclear export signal 2 motif lies at 331 to 339 (LGYLPQELL). Positions 371-414 (TDSYKFRVKDGAFVTLKSEWFSFTNPWTKELEYIVSVNTLVLGR) constitute a PAC domain. Residues 469 to 536 (RLHSSSPEDA…AHPHGPLPGD (68 aa)) are disordered.

In terms of assembly, component of the circadian core oscillator, which includes the CRY proteins, CLOCK, or NPAS2, BMAL1 or BMAL2, CSNK1D and/or CSNK1E, TIMELESS and the PER proteins. Interacts directly with CLOCK to form the BMAL2-CLOCK transactivator. Can form heterodimers or homodimers which interact directly with CLOCK to form the transcription activator. Interacts with NPAS2 and HIF1A. Interacts with PER2. As to expression, expressed in the suprachiasmatic nucleus (SCN).

It is found in the nucleus. Transcriptional activator which forms a core component of the circadian clock. The circadian clock, an internal time-keeping system, regulates various physiological processes through the generation of approximately 24 hour circadian rhythms in gene expression, which are translated into rhythms in metabolism and behavior. It is derived from the Latin roots 'circa' (about) and 'diem' (day) and acts as an important regulator of a wide array of physiological functions including metabolism, sleep, body temperature, blood pressure, endocrine, immune, cardiovascular, and renal function. Consists of two major components: the central clock, residing in the suprachiasmatic nucleus (SCN) of the brain, and the peripheral clocks that are present in nearly every tissue and organ system. Both the central and peripheral clocks can be reset by environmental cues, also known as Zeitgebers (German for 'timegivers'). The predominant Zeitgeber for the central clock is light, which is sensed by retina and signals directly to the SCN. The central clock entrains the peripheral clocks through neuronal and hormonal signals, body temperature and feeding-related cues, aligning all clocks with the external light/dark cycle. Circadian rhythms allow an organism to achieve temporal homeostasis with its environment at the molecular level by regulating gene expression to create a peak of protein expression once every 24 hours to control when a particular physiological process is most active with respect to the solar day. Transcription and translation of core clock components (CLOCK, NPAS2, BMAL1, BMAL2, PER1, PER2, PER3, CRY1 and CRY2) plays a critical role in rhythm generation, whereas delays imposed by post-translational modifications (PTMs) are important for determining the period (tau) of the rhythms (tau refers to the period of a rhythm and is the length, in time, of one complete cycle). A diurnal rhythm is synchronized with the day/night cycle, while the ultradian and infradian rhythms have a period shorter and longer than 24 hours, respectively. Disruptions in the circadian rhythms contribute to the pathology of cardiovascular diseases, cancer, metabolic syndromes and aging. A transcription/translation feedback loop (TTFL) forms the core of the molecular circadian clock mechanism. Transcription factors, CLOCK or NPAS2 and BMAL1 or BMAL2, form the positive limb of the feedback loop, act in the form of a heterodimer and activate the transcription of core clock genes and clock-controlled genes (involved in key metabolic processes), harboring E-box elements (5'-CACGTG-3') within their promoters. The core clock genes: PER1/2/3 and CRY1/2 which are transcriptional repressors form the negative limb of the feedback loop and interact with the CLOCK|NPAS2-BMAL1|BMAL2 heterodimer inhibiting its activity and thereby negatively regulating their own expression. This heterodimer also activates nuclear receptors NR1D1/2 and RORA/B/G, which form a second feedback loop and which activate and repress BMAL1 transcription, respectively. The CLOCK-BMAL2 heterodimer activates the transcription of SERPINE1/PAI1 and BHLHE40/DEC1. In Mus musculus (Mouse), this protein is Basic helix-loop-helix ARNT-like protein 2 (Bmal2).